The primary structure comprises 438 residues: Protein DAY-LENGTH-DEPENDENT DELAYED-GREENING 1, chloroplastic (438 aa).

The transit peptide at 1–54 (MSLMSSSMVLCHCLSFSSQNPDPESSSSSLLRYKPCDSISLWGKRRKKLWRFVP) directs the protein to the chloroplast. Helical transmembrane passes span 216 to 236 (FLAVLILIPWALDFLAHDYLL), 314 to 334 (AFANIWSDMVFGISLFVLLYA), 359 to 379 (AFLIILITDIFLGYHSESGWE), and 398 to 418 (ITIFICLVPVIMDACVKLWLF).

The protein belongs to the CemA family.

The protein resides in the plastid. The protein localises to the chloroplast envelope. It is found in the chloroplast membrane. It carries out the reaction K(+)(in) + H(+)(out) = K(+)(out) + H(+)(in). The enzyme catalyses Ca(2+)(in) + H(+)(out) = Ca(2+)(out) + H(+)(in). Its function is as follows. Promotes K(+)/H(+) antiport activity supporting K(+) efflux to control H(+) homeostasis in chloroplasts. Also able to ensure Ca(2+)/H(+) antiport activity in vitro. Essential for chloroplast pH regulation and optimization of non-photochemical quenching (NPQ), a regulatory mechanism that dissipates excess light energy; acts downstream of PSBS but independently from PGR5 and FLAP1. The sequence is that of Protein DAY-LENGTH-DEPENDENT DELAYED-GREENING 1, chloroplastic from Arabidopsis thaliana (Mouse-ear cress).